Consider the following 66-residue polypeptide: Beta-toxin Cbo3 (66 aa).

Residues 1–66 enclose the LCN-type CS-alpha/beta domain; it reads KEGYIVNYHD…VWPLPKKTCN (66 aa). 4 cysteine pairs are disulfide-bonded: C12–C65, C16–C41, C25–C46, and C29–C48. Residue N66 is modified to Asparagine amide.

Belongs to the long (4 C-C) scorpion toxin superfamily. Sodium channel inhibitor family. Beta subfamily. In terms of tissue distribution, expressed by the venom gland.

It is found in the secreted. Its function is as follows. Beta toxins bind voltage-independently at site-4 of sodium channels and shift the voltage of activation toward more negative potentials thereby affecting sodium channel activation and promoting spontaneous and repetitive firing. A mixture of Cbo2 and Cbo3 is weakly active on the human voltage-gated sodium channels Nav1.4/SCN4A and Nav1.6/SCN8A when tested at 200 nM. In vivo, is toxic to mice when intraperitoneally injected. This chain is Beta-toxin Cbo3, found in Centruroides bonito (Scorpion).